A 404-amino-acid chain; its full sequence is 4-hydroxy-3-methylbut-2-en-1-yl diphosphate synthase (flavodoxin) (404 aa).

[4Fe-4S] cluster contacts are provided by cysteine 310, cysteine 313, cysteine 345, and glutamate 352.

The protein belongs to the IspG family. [4Fe-4S] cluster serves as cofactor.

It carries out the reaction (2E)-4-hydroxy-3-methylbut-2-enyl diphosphate + oxidized [flavodoxin] + H2O + 2 H(+) = 2-C-methyl-D-erythritol 2,4-cyclic diphosphate + reduced [flavodoxin]. It participates in isoprenoid biosynthesis; isopentenyl diphosphate biosynthesis via DXP pathway; isopentenyl diphosphate from 1-deoxy-D-xylulose 5-phosphate: step 5/6. Converts 2C-methyl-D-erythritol 2,4-cyclodiphosphate (ME-2,4cPP) into 1-hydroxy-2-methyl-2-(E)-butenyl 4-diphosphate. This chain is 4-hydroxy-3-methylbut-2-en-1-yl diphosphate synthase (flavodoxin), found in Treponema pallidum (strain Nichols).